The chain runs to 327 residues: DNA repair protein XRCC4 (327 aa).

Residues Met1–Arg211 form an interaction with IFFO1 region. Ser53 is modified (phosphoserine). 2 coiled-coil regions span residues Ile133–Asp153 and Leu183–Thr213. Interaction with LIG4 stretches follow at residues Phe179–Glu210 and Phe179–Arg211. Phosphoserine is present on Ser192. Lys208 participates in a covalent cross-link: Glycyl lysine isopeptide (Lys-Gly) (interchain with G-Cter in SUMO). Tyr226 is modified (phosphotyrosine). Position 229 is a phosphoserine (Ser229). Thr230 is modified (phosphothreonine). Phosphoserine is present on residues Ser249 and Ser253. Residues Asp255–Asp327 form a disordered region. Residues Arg263–His268 carry the Nuclear localization signal motif. Residue Lys289 forms a Glycyl lysine isopeptide (Lys-Gly) (interchain with G-Cter in ubiquitin) linkage. Residues Ser294, Ser295, Ser308, and Ser313 each carry the phosphoserine modification. A compositionally biased stretch (polar residues) spans Ser308 to Asp327. Thr316 is modified (phosphothreonine). Phosphoserine occurs at positions 320 and 321.

It belongs to the XRCC4-XLF family. XRCC4 subfamily. As to quaternary structure, homodimer and homotetramer in solution. Interacts with NHEJ1/XLF; the interaction is direct and is mediated via a head-to-head interaction between N-terminal head regions. Interacts with LIG4; the LIG4-XRCC4 subcomplex has a 1:2 stoichiometry and XRCC4 is required for LIG4 stability. Component of the core long-range non-homologous end joining (NHEJ) complex (also named DNA-PK complex) composed of PRKDC, LIG4, XRCC4, XRCC6/Ku70, XRCC5/Ku86 and NHEJ1/XLF. Additional component of the NHEJ complex includes PAXX. Following autophosphorylation, PRKDC dissociates from DNA, leading to formation of the short-range NHEJ complex, composed of LIG4, XRCC4, XRCC6/Ku70, XRCC5/Ku86 and NHEJ1/XLF. Interacts with PRKDC; the interaction is direct. Interacts with XRCC6/Ku70; the interaction is direct. Interacts with APTX and APLF. Forms a heterotetramer with IFFO1; the interaction involves LIG4-free XRCC4 and leads to the relocalization of IFFO1 to the sites of DNA damage. Interacts with PNKP; mainly interacts with PNKP when phosphorylated at Thr-230, but is also able to interact at much lower level with PNKP when not unphosphorylated. Interacts with POLL (DNA polymerase lambda). In terms of assembly, interacts with XKR4; interacts with the processed form of XKR4, which is cleaved by caspase. Post-translationally, phosphorylated by PRKDC at the C-terminus in response to DNA damage; Ser-253 constitutes the main phosphorylation sites. Phosphorylations by PRKDC at the C-terminus of XRCC4 and NHEJ1/XLF are highly redundant and regulate ability of the XRCC4-NHEJ1/XLF subcomplex to bridge DNA. Phosphorylation by PRKDC does not prevent interaction with NHEJ1/XLF but disrupts ability to bridge DNA and promotes detachment from DNA. Phosphorylation at Ser-320 and Ser-321 by PRKDC promotes recognition by the SCF(FBXW7) complex and subsequent ubiquitination via 'Lys-63'-linked ubiquitin. Phosphorylation at Thr-230 by CK2 promotes interaction with PNKP; regulating PNKP activity and localization to DNA damage sites. Phosphorylation by CK2 promotes interaction with APTX. Ubiquitinated at Lys-289 by the SCF(FBXW7) complex via 'Lys-63'-linked ubiquitination, thereby promoting double-strand break repair: the SCF(FBXW7) complex specifically recognizes XRCC4 when phosphorylated at Ser-320 and Ser-321 by PRKDC, and 'Lys-63'-linked ubiquitination facilitates DNA non-homologous end joining (NHEJ) by enhancing association with XRCC5/Ku80 and XRCC6/Ku70. Monoubiquitinated. In terms of processing, undergoes proteolytic processing by caspase-3 (CASP3). This generates the protein XRCC4, C-terminus (XRCC4/C), which translocates to the cytoplasm and activates phospholipid scramblase activity of XKR4, thereby promoting phosphatidylserine exposure on apoptotic cell surface.

Its subcellular location is the nucleus. The protein localises to the chromosome. The protein resides in the cytoplasm. Functionally, DNA non-homologous end joining (NHEJ) core factor, required for double-strand break repair and V(D)J recombination. Acts as a scaffold protein that regulates recruitment of other proteins to DNA double-strand breaks (DSBs). Associates with NHEJ1/XLF to form alternating helical filaments that bridge DNA and act like a bandage, holding together the broken DNA until it is repaired. The XRCC4-NHEJ1/XLF subcomplex binds to the DNA fragments of a DSB in a highly diffusive manner and robustly bridges two independent DNA molecules, holding the broken DNA fragments in close proximity to one other. The mobility of the bridges ensures that the ends remain accessible for further processing by other repair factors. Plays a key role in the NHEJ ligation step of the broken DNA during DSB repair via direct interaction with DNA ligase IV (LIG4): the LIG4-XRCC4 subcomplex reseals the DNA breaks after the gap filling is completed. XRCC4 stabilizes LIG4, regulates its subcellular localization and enhances LIG4's joining activity. Binding of the LIG4-XRCC4 subcomplex to DNA ends is dependent on the assembly of the DNA-dependent protein kinase complex DNA-PK to these DNA ends. Promotes displacement of PNKP from processed strand break termini. Its function is as follows. Acts as an activator of the phospholipid scramblase activity of XKR4. This form, which is generated upon caspase-3 (CASP3) cleavage, translocates into the cytoplasm and interacts with XKR4, thereby promoting phosphatidylserine scramblase activity of XKR4 and leading to phosphatidylserine exposure on apoptotic cell surface. This Cricetulus griseus (Chinese hamster) protein is DNA repair protein XRCC4.